The following is a 132-amino-acid chain: Large-conductance mechanosensitive channel (132 aa).

Transmembrane regions (helical) follow at residues 14–34, 38–58, and 67–87; these read VVDL…VSSL, IITP…LHFG, and GNFI…FMFI.

Belongs to the MscL family. Homopentamer.

It localises to the cell membrane. In terms of biological role, channel that opens in response to stretch forces in the membrane lipid bilayer. May participate in the regulation of osmotic pressure changes within the cell. This chain is Large-conductance mechanosensitive channel, found in Bacillus cereus (strain G9842).